A 159-amino-acid chain; its full sequence is Cytochrome c nitrite reductase subunit NrfH (159 aa).

Residues 2 to 14 (SEEKSRNGPARLK) are Cytoplasmic-facing. A helical; Signal-anchor for type II membrane protein transmembrane segment spans residues 15-33 (LVLGGATLGVVALATVAFG). Over 34-159 (MKYTDQRPFC…PISTREVADE (126 aa)) the chain is Periplasmic. Positions 43, 46, 49, 61, and 66 each coordinate heme. An a menaquinol-binding site is contributed by N67. Heme is bound by residues C69 and H70. A menaquinol contacts are provided by K82 and D89. A heme-binding site is contributed by D89. Residues 99 to 100 (GD) are interaction with NrfA. C116, C119, H120, C136, C139, H140, and H145 together coordinate heme. Positions 123-158 (TNVEVASMEAKKYCTDCHRNVQHMRMKPISTREVAD) are interaction with NrfA.

Belongs to the NapC/NirT/NrfH family. Component of the NrfHA cytochrome c nitrite reductase complex composed of 4 NrfA catalytic subunits and 2 NrfH quinone-binding subunits. Interacts with NrfA homodimer. Requires heme as cofactor.

The protein localises to the cell inner membrane. Its function is as follows. Electron donor subunit of the cytochrome c nitrite reductase holocomplex NrfHA. Acquires electrons from the menaquinone pool and mediates their transfer to the catalytic subunit NrfA in an anaerobic respiratory process of nitrite. The other biological function of the NrfHA holocomplex is to detoxify nitrite. This function is essential for the survival of this organism as it enables it to overcome inhibition by nitrite, which is produced by other organisms living in the same environment. This chain is Cytochrome c nitrite reductase subunit NrfH, found in Nitratidesulfovibrio vulgaris (strain ATCC 29579 / DSM 644 / CCUG 34227 / NCIMB 8303 / VKM B-1760 / Hildenborough) (Desulfovibrio vulgaris).